Here is a 215-residue protein sequence, read N- to C-terminus: Putative lipoprotein NMB1124/NMB1162 (215 aa).

Positions 1 to 16 (MKPLILGLAAVLALSA) are cleaved as a signal peptide. A lipid anchor (N-palmitoyl cysteine) is attached at Cys-17. The S-diacylglycerol cysteine moiety is linked to residue Cys-17.

Its subcellular location is the cell membrane. The protein is Putative lipoprotein NMB1124/NMB1162 of Neisseria meningitidis serogroup B (strain ATCC BAA-335 / MC58).